The chain runs to 529 residues: Peptide chain release factor 3 (529 aa).

One can recognise a tr-type G domain in the interval 11 to 280; the sequence is NKRRTFAIIS…GLTEWAPKPQ (270 aa). GTP contacts are provided by residues 20–27, 88–92, and 142–145; these read SHPDAGKT, DTPGH, and NKLD.

The protein belongs to the TRAFAC class translation factor GTPase superfamily. Classic translation factor GTPase family. PrfC subfamily.

The protein resides in the cytoplasm. In terms of biological role, increases the formation of ribosomal termination complexes and stimulates activities of RF-1 and RF-2. It binds guanine nucleotides and has strong preference for UGA stop codons. It may interact directly with the ribosome. The stimulation of RF-1 and RF-2 is significantly reduced by GTP and GDP, but not by GMP. This is Peptide chain release factor 3 from Mannheimia succiniciproducens (strain KCTC 0769BP / MBEL55E).